A 681-amino-acid polypeptide reads, in one-letter code: DNA ligase (681 aa).

NAD(+) contacts are provided by residues 45-49 (DFDFD), 94-95 (SL), and E120. K122 functions as the N6-AMP-lysine intermediate in the catalytic mechanism. NAD(+)-binding residues include R143, E177, K289, and K313. Residues C403, C406, C421, and C426 each contribute to the Zn(2+) site. The region spanning 593–681 (SDQQPFAGQS…SLKINFKNTI (89 aa)) is the BRCT domain.

This sequence belongs to the NAD-dependent DNA ligase family. LigA subfamily. The cofactor is Mg(2+). It depends on Mn(2+) as a cofactor.

The catalysed reaction is NAD(+) + (deoxyribonucleotide)n-3'-hydroxyl + 5'-phospho-(deoxyribonucleotide)m = (deoxyribonucleotide)n+m + AMP + beta-nicotinamide D-nucleotide.. Its function is as follows. DNA ligase that catalyzes the formation of phosphodiester linkages between 5'-phosphoryl and 3'-hydroxyl groups in double-stranded DNA using NAD as a coenzyme and as the energy source for the reaction. It is essential for DNA replication and repair of damaged DNA. This chain is DNA ligase, found in Leptospira borgpetersenii serovar Hardjo-bovis (strain JB197).